We begin with the raw amino-acid sequence, 555 residues long: Zinc finger and SCAN domain-containing protein 21 (555 aa).

Disordered stretches follow at residues Met1–Lys74, Thr102–Thr133, Leu204–Val243, and Glu263–Pro354. 3 tandem repeats follow at residues Glu18–Leu56, Glu57–Leu95, and Glu96–Pro134. The 3 X 39 AA approximate tandem repeats stretch occupies residues Glu18–Pro134. A Glycyl lysine isopeptide (Lys-Gly) (interchain with G-Cter in SUMO2) cross-link involves residue Lys26. An SCAN box domain is found at Arg122–Leu204. A compositionally biased stretch (polar residues) spans Gln210–Thr240. Residues Pro280 to Lys302 show a composition bias toward basic and acidic residues. Residues Lys302 and Lys313 each participate in a glycyl lysine isopeptide (Lys-Gly) (interchain with G-Cter in SUMO2) cross-link. Basic and acidic residues predominate over residues Ser316–Thr332. C2H2-type zinc fingers lie at residues Tyr359–His381, Tyr387–His409, Tyr415–His436, Tyr442–His464, Tyr470–His492, Tyr498–His520, and Tyr526–His548. Residue Lys431 forms a Glycyl lysine isopeptide (Lys-Gly) (interchain with G-Cter in SUMO2) linkage.

This sequence belongs to the krueppel C2H2-type zinc-finger protein family. Expressed predominantly in the spermatocytes and spermatids of adult testes. It is also present at lower levels in the ovary, brain, spleen, embryo and fetus.

Its subcellular location is the nucleus. Its function is as follows. Strong transcriptional activator. Plays an important role in spermatogenesis; essential for the progression of meiotic prophase I in spermatocytes. This is Zinc finger and SCAN domain-containing protein 21 (Zscan21) from Mus musculus (Mouse).